Consider the following 169-residue polypeptide: 3-hydroxyanthranilate 3,4-dioxygenase (169 aa).

Residue Arg-44 coordinates O2. Positions 48, 54, and 92 each coordinate Fe cation. Glu-54 provides a ligand contact to substrate. Arg-96 and Glu-106 together coordinate substrate. A divalent metal cation is bound by residues Cys-121, Cys-124, Cys-158, and Cys-160.

This sequence belongs to the 3-HAO family. It depends on Fe(2+) as a cofactor.

It localises to the cytoplasm. It carries out the reaction 3-hydroxyanthranilate + O2 = (2Z,4Z)-2-amino-3-carboxymuconate 6-semialdehyde. It participates in cofactor biosynthesis; NAD(+) biosynthesis; quinolinate from L-kynurenine: step 3/3. Its function is as follows. Catalyzes the oxidative ring opening of 3-hydroxyanthranilate to 2-amino-3-carboxymuconate semialdehyde, which spontaneously cyclizes to quinolinate. The chain is 3-hydroxyanthranilate 3,4-dioxygenase from Meyerozyma guilliermondii (strain ATCC 6260 / CBS 566 / DSM 6381 / JCM 1539 / NBRC 10279 / NRRL Y-324) (Yeast).